The following is a 422-amino-acid chain: UDP-N-acetylglucosamine 1-carboxyvinyltransferase (422 aa).

Phosphoenolpyruvate is bound at residue 23–24 (KN). Arg92 provides a ligand contact to UDP-N-acetyl-alpha-D-glucosamine. Catalysis depends on Cys116, which acts as the Proton donor. Position 116 is a 2-(S-cysteinyl)pyruvic acid O-phosphothioketal (Cys116). UDP-N-acetyl-alpha-D-glucosamine contacts are provided by residues 121–125 (RPVDL), 161–164 (KVSV), Asp306, and Ile328.

It belongs to the EPSP synthase family. MurA subfamily.

It is found in the cytoplasm. The catalysed reaction is phosphoenolpyruvate + UDP-N-acetyl-alpha-D-glucosamine = UDP-N-acetyl-3-O-(1-carboxyvinyl)-alpha-D-glucosamine + phosphate. Its pathway is cell wall biogenesis; peptidoglycan biosynthesis. In terms of biological role, cell wall formation. Adds enolpyruvyl to UDP-N-acetylglucosamine. The sequence is that of UDP-N-acetylglucosamine 1-carboxyvinyltransferase from Aliivibrio salmonicida (strain LFI1238) (Vibrio salmonicida (strain LFI1238)).